The primary structure comprises 259 residues: Putative protein-disulfide oxidoreductase RBE_1288 (259 aa).

An N-terminal signal peptide occupies residues Met1–Glu20. Positions Val25 to Pro54 are disordered. The segment covering Ile33 to Asp42 has biased composition (polar residues). Residues Glu43–Pro54 are compositionally biased toward low complexity. In terms of domain architecture, Thioredoxin spans Gln47–Glu251. Cys104 and Cys107 form a disulfide bridge.

The protein belongs to the thioredoxin family. DsbA subfamily.

The protein localises to the periplasm. May be required for disulfide bond formation in some proteins. The chain is Putative protein-disulfide oxidoreductase RBE_1288 from Rickettsia bellii (strain RML369-C).